A 375-amino-acid polypeptide reads, in one-letter code: 4-hydroxy-3-methylbut-2-en-1-yl diphosphate synthase (flavodoxin) (375 aa).

4 residues coordinate [4Fe-4S] cluster: cysteine 275, cysteine 278, cysteine 310, and glutamate 317.

It belongs to the IspG family. [4Fe-4S] cluster is required as a cofactor.

The enzyme catalyses (2E)-4-hydroxy-3-methylbut-2-enyl diphosphate + oxidized [flavodoxin] + H2O + 2 H(+) = 2-C-methyl-D-erythritol 2,4-cyclic diphosphate + reduced [flavodoxin]. It functions in the pathway isoprenoid biosynthesis; isopentenyl diphosphate biosynthesis via DXP pathway; isopentenyl diphosphate from 1-deoxy-D-xylulose 5-phosphate: step 5/6. Its function is as follows. Converts 2C-methyl-D-erythritol 2,4-cyclodiphosphate (ME-2,4cPP) into 1-hydroxy-2-methyl-2-(E)-butenyl 4-diphosphate. The polypeptide is 4-hydroxy-3-methylbut-2-en-1-yl diphosphate synthase (flavodoxin) (Ruegeria pomeroyi (strain ATCC 700808 / DSM 15171 / DSS-3) (Silicibacter pomeroyi)).